A 1437-amino-acid chain; its full sequence is uncharacterized protein (1437 aa).

The first 25 residues, 1–25, serve as a signal peptide directing secretion; that stretch reads MRRGCRHHLAAVVLLIATFPPLAYN. Over 26–1326 the chain is Extracellular; sequence QNIGGINQNI…SRIKENYFKW (1301 aa). 7 N-linked (GlcNAc...) asparagine glycosylation sites follow: Asn-103, Asn-315, Asn-364, Asn-492, Asn-605, Asn-676, and Asn-914. In terms of domain architecture, NIDO spans 193-356; the sequence is AFFGQQASQA…GRYMFRVDDV (164 aa). One can recognise an AMOP domain in the interval 648-829; that stretch reads VKEKSREMCH…FRCQMFYWRR (182 aa). The helical transmembrane segment at 1327–1347 threads the bilayer; that stretch reads LAVIAGIVGIIIVILLIFLVF. Residues 1348–1437 lie on the Cytoplasmic side of the membrane; that stretch reads WCIKRKKLQE…QGMLGLNTSV (90 aa). Positions 1394–1419 are disordered; sequence PRTVAMPPPRGTTATPMTLEPRGFSP.

The protein localises to the membrane. This is an uncharacterized protein from Caenorhabditis elegans.